Here is a 123-residue protein sequence, read N- to C-terminus: MVDGRTRTIINDIFFTEPTPEMSSLPVRSHSSLSLNLVSLMVICRGIIKLVIHFRMYCPPRLKAKHIEPTLRPVPLKELRISHWPNECIRHSASVPMATGANGLETKDETKRNAEKCACSVFL.

This is an uncharacterized protein from Homo sapiens (Human).